The sequence spans 383 residues: Micronemal protein 3 (383 aa).

Residues 1–26 form the signal peptide; it reads MRGGTSALLHALTFSGAVWMCTPAEA. Residues 27–66 constitute a propeptide, required for proper sorting to micronemes; sequence LPIQKSVQLGSFDKVVPSREVVSESLAPSFAVTETHSSVQ. The lectin-like; required for the binding of host cells stretch occupies residues 67 to 145; the sequence is SPSKQETQLC…HPDKSYGGDC (79 aa). Required for proper sorting to micronemes stretches follow at residues 146 to 189, 190 to 236, and 237 to 290; these read SCEK…SEDP, CSKR…KRTG, and CHAF…LAEK. In terms of domain architecture, EGF-like spans 186–227; that stretch reads SEDPCSKRGNAKCGPNGTCIVVDSVSYTCTCGDGETLVNLPE. 2 cysteine pairs are disulfide-bonded: Cys-190–Cys-204 and Cys-198–Cys-214. N-linked (GlcNAc...) asparagine glycosylation occurs at Asn-201. The involved in dimerization stretch occupies residues 294-359; sequence EFGISASSCK…HTVTCEKIKH (66 aa).

Homodimer; dimerization is likely required for host cell binding but not for trafficking to micronemes. Post-translationally, removal of the propeptide occurs in a post-medial-Golgi compartment. Removal of the propeptide is required for the host cell binding. The presence of propeptide does not affect dimerization. The presence of propeptide does not affect sorting to micronemes.

The protein localises to the cytoplasmic vesicle. It localises to the secretory vesicle. Its subcellular location is the microneme. The protein resides in the secreted. It is found in the golgi apparatus. The protein localises to the endoplasmic reticulum. In terms of biological role, adhesin; can bind both the host cells and the parasites. May be involved in parasite invasion by acting as a bridge between the parasite and the host cell. Triggers innate immune responses in mouse macrophages via the TLR11/MyD88/NF-kappa-B pathway. Induces TNF/TNF-alpha secretion in mouse macrophages. Induces secretion of IL6 in mouse and human macrophages likely via different mechanisms. Up-regulates expression of NOS2/iNOS in mouse macrophages. Induces mouse macrophage polarization. The chain is Micronemal protein 3 from Toxoplasma gondii.